A 2448-amino-acid polypeptide reads, in one-letter code: Cysteine repeat modular protein 1 (2448 aa).

The helical transmembrane segment at 9–29 (TSTNLLNIFALYFSAICFIYC) threads the bilayer. N-linked (GlcNAc...) asparagine glycosylation is found at N48, N89, N248, N284, N461, N503, N542, N598, and N619. 4 FU repeats span residues 431–481 (KNTC…GYYF), 485–530 (FMQC…GFYI), 535–566 (NFKC…FYLS), and 567–611 (SNTC…GQFA). FU repeat units follow at residues 645 to 694 (NNQC…GYFP), 698 to 727 (TSVC…YYLQ), 728 to 772 (DSNC…GTFG), 775 to 813 (QNIC…ITNN), 819 to 868 (KGMC…YYLS), 904 to 947 (GRVC…GFPD), 950 to 983 (QNVC…LNPA), 984 to 1027 (NNIC…RTYP), 1063 to 1109 (QGAC…NQYV), and 1113 to 1144 (QNRC…GFYL). N-linked (GlcNAc...) asparagine glycosylation is found at N761 and N812. N934 carries N-linked (GlcNAc...) asparagine glycosylation. A glycan (N-linked (GlcNAc...) asparagine) is linked at N1002. N1146 carries an N-linked (GlcNAc...) asparagine glycan. The stretch at 1147-1193 (QTQCSICDISCLQCSGPGFDSCIQCAQGYYKLGDSVCVQSCPDGFFL) is one FU 15 repeat. N1194 is a glycosylation site (N-linked (GlcNAc...) asparagine). FU repeat units follow at residues 1197–1232 (NNQC…ISNQ), 1234–1279 (GIIC…GYRS), 1281–1332 (KGVC…GTFQ), 1346–1394 (SYYC…GFIL), and 1402–1436 (NQYC…GTVQ). 3 N-linked (GlcNAc...) asparagine glycosylation sites follow: N1296, N1328, and N1365. N1506, N1601, N1628, and N1670 each carry an N-linked (GlcNAc...) asparagine glycan. Residues 1739 to 1773 (SDISCSLNLCMNSGKCVPNSIFCSCPSAFTGPKCQ) enclose the EGF-like domain. 3 disulfide bridges follow: C1743-C1754, C1748-C1761, and C1763-C1772. N1800, N1849, N1877, N1942, N2117, N2155, and N2179 each carry an N-linked (GlcNAc...) asparagine glycan. The next 2 membrane-spanning stretches (helical) occupy residues 2201–2221 (LYIM…YSAI) and 2238–2258 (IYFL…NQFV). A glycan (N-linked (GlcNAc...) asparagine) is linked at N2260. Transmembrane regions (helical) follow at residues 2267–2287 (SLTI…ILPF), 2296–2316 (ILTS…TIGV), 2352–2372 (MIGL…IGLC), and 2386–2406 (AVFL…IIVG).

The protein localises to the membrane. Its function is as follows. Required for mucocyst secretion. This chain is Cysteine repeat modular protein 1, found in Tetrahymena thermophila (strain SB210).